Here is a 600-residue protein sequence, read N- to C-terminus: UvrABC system protein C (600 aa).

The 86-residue stretch at 15–100 (NSAGVYEYFN…IKQLHPKYNI (86 aa)) folds into the GIY-YIG domain. The region spanning 203-238 (SVLLKNLEKQMLVLAQNENYEEAAKIRDQIATIKDL) is the UVR domain.

The protein belongs to the UvrC family. In terms of assembly, interacts with UvrB in an incision complex.

The protein resides in the cytoplasm. The UvrABC repair system catalyzes the recognition and processing of DNA lesions. UvrC both incises the 5' and 3' sides of the lesion. The N-terminal half is responsible for the 3' incision and the C-terminal half is responsible for the 5' incision. This is UvrABC system protein C from Campylobacter jejuni subsp. doylei (strain ATCC BAA-1458 / RM4099 / 269.97).